A 213-amino-acid polypeptide reads, in one-letter code: ATP-dependent Clp protease proteolytic subunit 1 (213 aa).

Catalysis depends on Ser-108, which acts as the Nucleophile. His-133 is an active-site residue.

Belongs to the peptidase S14 family. In terms of assembly, fourteen ClpP subunits assemble into 2 heptameric rings which stack back to back to give a disk-like structure with a central cavity, resembling the structure of eukaryotic proteasomes.

Its subcellular location is the cytoplasm. The enzyme catalyses Hydrolysis of proteins to small peptides in the presence of ATP and magnesium. alpha-casein is the usual test substrate. In the absence of ATP, only oligopeptides shorter than five residues are hydrolyzed (such as succinyl-Leu-Tyr-|-NHMec, and Leu-Tyr-Leu-|-Tyr-Trp, in which cleavage of the -Tyr-|-Leu- and -Tyr-|-Trp bonds also occurs).. Functionally, cleaves peptides in various proteins in a process that requires ATP hydrolysis. Has a chymotrypsin-like activity. Plays a major role in the degradation of misfolded proteins. The polypeptide is ATP-dependent Clp protease proteolytic subunit 1 (Frankia casuarinae (strain DSM 45818 / CECT 9043 / HFP020203 / CcI3)).